Reading from the N-terminus, the 88-residue chain is Small ribosomal subunit protein uS17 (88 aa).

The protein belongs to the universal ribosomal protein uS17 family. In terms of assembly, part of the 30S ribosomal subunit.

One of the primary rRNA binding proteins, it binds specifically to the 5'-end of 16S ribosomal RNA. The polypeptide is Small ribosomal subunit protein uS17 (Lactobacillus helveticus (strain DPC 4571)).